Reading from the N-terminus, the 188-residue chain is RWD domain-containing protein 4 (188 aa).

An RWD domain is found at 9–111; that stretch reads MELEALRSIY…EYAKDHKEQF (103 aa). The tract at residues 132–167 is disordered; that stretch reads TPTTAPSSKKKEKKEQLSKAQKRKLADKTDHKGELP. Over residues 155 to 166 the composition is skewed to basic and acidic residues; the sequence is KLADKTDHKGEL.

This chain is RWD domain-containing protein 4 (Rwdd4), found in Mus musculus (Mouse).